The following is an 84-amino-acid chain: MYB-like transcription factor TCL1 (84 aa).

Positions 36–73 (TEQEEDLIFRMYRLVGDRWDLIARRVVGREAKEIERYW) constitute a Myb-like domain.

Expressed in inflorescences and trichomes of rosette and cauline leaves.

The protein localises to the nucleus. MYB-type transcription factor involved in trichome cell specification. Acts as a negative regulator of trichome patterning and formation by direct binding to the cis-acting regulatory elements of GL1, thus suppressing the expression of GL1. In Arabidopsis thaliana (Mouse-ear cress), this protein is MYB-like transcription factor TCL1 (TCL1).